A 324-amino-acid polypeptide reads, in one-letter code: Casein kinase I (324 aa).

A Protein kinase domain is found at 9–278 (YALGKKLGSG…LRRLLKDLFI (270 aa)). Residues 15-23 (LGSGSFGDI) and lysine 38 contribute to the ATP site. Aspartate 128 serves as the catalytic Proton acceptor.

The protein belongs to the protein kinase superfamily. CK1 Ser/Thr protein kinase family. Casein kinase I subfamily. As to quaternary structure, interacts with rhoptry protein RON3; the interaction is direct. Interacts with CK2alpha; the interaction is direct. Interacts with nucleosome assembly protein NAPL. Interacts with RAB5b. Interacts with host GAPVD1. Interacts with host SNX22. Mg(2+) serves as cofactor.

It localises to the cytoplasm. Its subcellular location is the cytoplasmic vesicle. The protein localises to the secretory vesicle. It is found in the microneme. The protein resides in the secreted. It localises to the host cell surface. The enzyme catalyses L-seryl-[protein] + ATP = O-phospho-L-seryl-[protein] + ADP + H(+). It catalyses the reaction L-threonyl-[protein] + ATP = O-phospho-L-threonyl-[protein] + ADP + H(+). Functionally, serine/threonine-protein kinase likely to be involved in many cellular processes. Phosphorylates rhoptry protein RON3, nucleosome assembly protein NAPL and DNA/RNA-binding protein ALBA4 in vitro. The chain is Casein kinase I from Plasmodium falciparum (isolate Dd2).